A 147-amino-acid polypeptide reads, in one-letter code: Hemoglobin subunit epsilon (147 aa).

A Globin domain is found at 3–147 (HFTAEEKAAV…VAIALAHKYH (145 aa)). Ser14 and Ser51 each carry phosphoserine. Residues His64 and His93 each contribute to the heme b site.

This sequence belongs to the globin family. As to quaternary structure, heterotetramer of two alpha chains and two epsilon chains in early embryonic hemoglobin Gower-2; two zeta chains and two epsilon chains in early embryonic hemoglobin Gower-1. Red blood cells.

The epsilon chain is a beta-type chain of early mammalian embryonic hemoglobin. In Pan paniscus (Pygmy chimpanzee), this protein is Hemoglobin subunit epsilon (HBE1).